A 380-amino-acid polypeptide reads, in one-letter code: Ubiquitin-like protein 7 (380 aa).

The Ubiquitin-like domain maps to 18–98 (TPKSILRLPE…VLRKSWPEPD (81 aa)). Residues 200 to 313 (APMPGTDSSS…SSGVQSGTPI (114 aa)) form a disordered region. Low complexity predominate over residues 206–221 (DSSSRSMPSSSYRDMP). Serine 230 carries the post-translational modification Phosphoserine. Low complexity-rich tracts occupy residues 240-253 (TRST…SSRP) and 270-293 (SELA…TPGT). Polar residues predominate over residues 294-313 (QGHSSGTSPMSSGVQSGTPI). In terms of domain architecture, UBA spans 333 to 377 (SLQSQWQPQLQQLRDMGIQDDELSLRALQATGGDIQAALELIFAG).

In terms of assembly, binds ubiquitin. Interacts with MAVS; this interaction enhances TRIM21-dependent 'Lys-27'-linked polyubiquitination of MAVS. Post-translationally, deubiquitinated by OTUD4 which stabilizes UBL7 expression. Ubiquitous. Highly expressed in heart, skeletal muscle, testis, thyroid and adrenal gland.

Functionally, interferon-stimulated protein that positively regulates RNA virus-triggered innate immune signaling. Mechanistically, promotes 'Lys-27'-linked polyubiquitination of MAVS through TRIM21 leading to enhanced the IFN signaling pathway. In Homo sapiens (Human), this protein is Ubiquitin-like protein 7 (UBL7).